A 194-amino-acid chain; its full sequence is Calcium channel flower (194 aa).

The next 3 helical transmembrane spans lie at 35-55 (LGIVAAFFAILFGLWNVFSII), 66-88 (IIQMVAGFVVMLLEALCCFVCFE), and 107-127 (GLYIAMAIPPIILCFGLASLF).

The protein belongs to the calcium channel flower family. In terms of assembly, homomultimer. Associates with the dally/ magu complex.

The protein localises to the cell membrane. Its subcellular location is the cytoplasmic vesicle. It is found in the secretory vesicle. The protein resides in the synaptic vesicle membrane. It localises to the presynaptic cell membrane. The protein localises to the endosome. With respect to regulation, channel activity is inhibited by La(3+), which reduces Ca(2+) influx and thus inhibits it's function in promoting activity-dependent bulk endocytosis (ADBE) in response to high stimuli. Its function is as follows. Transmembrane protein which mediates synaptic endocytosis, fitness-based cell culling, neuronal culling, morphogen gradient scaling, and calcium transport. Regulates synaptic endocytosis and hence couples exo- with endocytosis. Controls two major modes of synaptic vesicle (SV) endocytosis in the synaptic boutons of neuromuscular junctions (NMJs); Ca(2+) channel-independent Clathrin-mediated endocytosis (CME) in response to mild stimulation, and Ca(2+) channel-dependent activity-dependent bulk endocytosis (ADBE) in response to strong stimulation. Functions in ADBE and subsequent SV reformation from bulk endosomes by initiating Ca(2+) channel-dependent phosphatidylinositol 4,5-bisphosphate (PtdIns(4,5)P2) compartmentalization in synaptic boutons. There it acts at the periactive zone to provide the low Ca(2+) levels required to initiate Calcineurin activation and upregulate PtdIns(4,5)P2. Conversely PtdIns(4,5)P2 enhances fwe Ca(2+) channel-activity, establishing a positive feedback loop that induces PtdIns(4,5)P2 microdomain at the periactive zone. These microdomains trigger bulk membrane invagination (i.e. ADBE) by triggering actin polymerization while also promoting localization of fwe to bulk endosomes, thereby removing the ADBE trigger to reduce endocytosis and prevent excess membrane uptake. PtdIns(4,5)P2 then promotes SV reformation from the bulk endosomes, to coordinate ADBE and subsequent SV reformation. Different combinations of the flower isoforms at the cell membrane are also required for the identification and elimination of suboptimal or supernumerary cells during development, regeneration, and adulthood. Required for the recognition and elimination of unfit cells in the developing wing during cell competition. In the developing pupal retina, mediates the elimination of unwanted postmitotic neurons, including supernumerary photoreceptor neurons that form at the periphery of the retina and are contained within incomplete ommatidia units. Also required for efficient elimination and replacement of old neurons by newly generated neurons during regeneration in the adult brain following mechanical injury. Downstream of the flower fitness fingerprints, cells identified as unwanted or unfit are eliminated via apoptosis through the expression of ahuizotl (azot). However, the cells marked for elimination by the flower isoforms only undergo apoptosis if additional thresholds are met; (1) their neighboring fit/healthy cells express different levels of the fwe isoforms, and (2) the levels of the protective signal SPARC expressed by the loser or unwanted cells are unable to inhibit caspase activation. These additional thresholds for flower-mediated apoptosis, allows useful cells to recover from transient and limited stress before they are unnecessarily eliminated. Functions with dally and magu in a mechanism of scaling, which utilises apoptosis to ensure that the dpp morphogen gradient, which mediates organ growth, remains proportional to the size of the growing wing. In this mechanism, fwe represses dally- and Magu-dependent activity in expanding the gradient, and dally/Magu inhibits fwe-dependent apoptosis to keep cell death rate low. When the levels of these different proteins are optimally regulated the gradient correctly scales with organ growth but when this fails, fwe-mediated apoptosis is activated to trim the developing tissue to match the correct size of the gradient. The protein is Calcium channel flower of Drosophila sechellia (Fruit fly).